A 299-amino-acid chain; its full sequence is UPF0282 protein TK1681 (299 aa).

It belongs to the UPF0282 family.

The polypeptide is UPF0282 protein TK1681 (Thermococcus kodakarensis (strain ATCC BAA-918 / JCM 12380 / KOD1) (Pyrococcus kodakaraensis (strain KOD1))).